A 220-amino-acid chain; its full sequence is Protein CREG1 (220 aa).

An N-terminal signal peptide occupies residues 1–31 (MAGLSRGSARALLAALLASTLLALLVSPARG). 3 N-linked (GlcNAc...) asparagine glycosylation sites follow: asparagine 160, asparagine 193, and asparagine 216.

Belongs to the CREG family. As to quaternary structure, homodimer. Interacts with IGF2R; the interaction is dependent on glycosylation. Post-translationally, N-glycosylated.

It is found in the secreted. Functionally, may contribute to the transcriptional control of cell growth and differentiation. Antagonizes transcriptional activation and cellular transformation by the adenovirus E1A protein. The transcriptional control activity of cell growth requires interaction with IGF2R. This chain is Protein CREG1 (CREG1), found in Homo sapiens (Human).